The primary structure comprises 87 residues: Large ribosomal subunit protein bL31B (87 aa).

This sequence belongs to the bacterial ribosomal protein bL31 family. Type B subfamily. Part of the 50S ribosomal subunit.

This Burkholderia ambifaria (strain MC40-6) protein is Large ribosomal subunit protein bL31B.